The following is a 654-amino-acid chain: Sphingosine kinase 2 (654 aa).

A compositionally biased stretch (basic and acidic residues) spans 1 to 17; it reads MNGHLEAEEQQDQRPDQ. Positions 1-28 are disordered; the sequence is MNGHLEAEEQQDQRPDQELTGSWGHGPR. Positions 1–175 are required for binding to sulfatide and phosphoinositides and for membrane localizatione; sequence MNGHLEAEEQ…LPGDGEITPD (175 aa). A Nuclear localization signal motif is present at residues 122-130; that stretch reads RGRRGARRR. Residues 178 to 325 enclose the DAGKc domain; that stretch reads PRPPRLLLLV…LDLLSVTLAS (148 aa). Residues 188 to 190 and 220 to 224 contribute to the ATP site; these read NPF and TERQN. Residue 245–248 coordinates substrate; sequence SGDG. Catalysis depends on Asp-247, which acts as the Proton donor/acceptor. ATP-binding positions include Glu-252 and 277 to 279; that span reads GSG. Asp-344 contacts substrate. Residues Arg-351 and Arg-357 each contribute to the ATP site. Residue Ser-387 is modified to Phosphoserine; by MAPK. Residues Ser-393 and Ser-399 each carry the phosphoserine modification. Residues 400–509 are disordered; that stretch reads ELTLTPDPAP…PLPTPDARVG (110 aa). Residues 416–425 carry the Nuclear export signal motif; it reads LHRSVSDLPL. Ser-419 and Ser-421 each carry phosphoserine; by PKD. The span at 447-461 shows a compositional bias: gly residues; it reads NGGGPELAGDWGGAG. A compositionally biased stretch (low complexity) spans 462-482; the sequence is DAPLSPDPLLSSPPGSPKAAL. Residue Ser-477 is modified to Phosphoserine. Thr-614 is modified (phosphothreonine; by MAPK). Position 622–624 (622–624) interacts with ATP; that stretch reads DGE.

As to quaternary structure, interacts with histone H3. Interacts with HDAC1, HDAC2, MBD2 and SIN3A. Interacts with EEF1A1; the interaction enhances SPHK2 kinase activity. Interacts with PHB2. Mg(2+) is required as a cofactor. In terms of processing, phosphorylated by PKD on Ser-419 and Ser-421 upon PMA treatment. Phosphorylation induces export from the nucleus to the cytoplasm. Phosphorylated by MAPK1 and MAPK2 at Ser-387 and Thr-614, phosphorylation is induced by agonists such as EGF and PMA and increases kinase activity. Cleaved by CASP1 in apoptotic cells. The truncated form is released from cells. In terms of tissue distribution, mainly expressed in adult kidney, liver, and brain. Expressed in cerebral cortex and hippocampus (at protein level). Isoform 1 is the predominant form expressed in most tissues.

Its subcellular location is the cytoplasm. The protein localises to the nucleus. The protein resides in the endoplasmic reticulum. It localises to the mitochondrion inner membrane. It is found in the lysosome membrane. The catalysed reaction is a sphingoid base + ATP = a sphingoid 1-phosphate + ADP + H(+). The enzyme catalyses sphing-4-enine + ATP = sphing-4-enine 1-phosphate + ADP + H(+). It catalyses the reaction sphinganine + ATP = sphinganine 1-phosphate + ADP + H(+). It carries out the reaction (4R)-hydroxysphinganine + ATP = (4R)-hydroxysphinganine 1-phosphate + ADP + H(+). Its activity is regulated as follows. Inhibited by sulfatide. Kinase activity is increased by phosphorylation by MAPK2 upon PMA or EGF treatments. Catalyzes the phosphorylation of sphingosine to form sphingosine-1-phosphate (SPP), a lipid mediator with both intra- and extracellular functions. Also acts on D-erythro-dihydrosphingosine, D-erythro-sphingosine and L-threo-dihydrosphingosine. Binds phosphoinositides. In contrast to prosurvival SPHK1, has a positive effect on intracellular ceramide levels, inhibits cells growth and enhances apoptosis. In mitochondria, is important for cytochrome-c oxidase assembly and mitochondrial respiration. The SPP produced in mitochondria binds PHB2 and modulates the regulation via PHB2 of complex IV assembly and respiration. In nucleus, plays a role in epigenetic regulation of gene expression. Interacts with HDAC1 and HDAC2 and, through SPP production, inhibits their enzymatic activity, preventing the removal of acetyl groups from lysine residues with histones. Up-regulates acetylation of histone H3-K9, histone H4-K5 and histone H2B-K12. In nucleus, may have an inhibitory effect on DNA synthesis and cell cycle. In mast cells, is the main regulator of SPP production which mediates calcium influx, NF-kappa-B activation, cytokine production, such as TNF and IL6, and degranulation of mast cells. In dopaminergic neurons, is involved in promoting mitochondrial functions regulating ATP and ROS levels. Also involved in the regulation of glucose and lipid metabolism. The polypeptide is Sphingosine kinase 2 (Homo sapiens (Human)).